The primary structure comprises 504 residues: Histidine ammonia-lyase (504 aa).

The segment at residues 141–143 (ASG) is a cross-link (5-imidazolinone (Ala-Gly)). Ser142 bears the 2,3-didehydroalanine (Ser) mark.

The protein belongs to the PAL/histidase family. Contains an active site 4-methylidene-imidazol-5-one (MIO), which is formed autocatalytically by cyclization and dehydration of residues Ala-Ser-Gly.

The protein localises to the cytoplasm. The enzyme catalyses L-histidine = trans-urocanate + NH4(+). It participates in amino-acid degradation; L-histidine degradation into L-glutamate; N-formimidoyl-L-glutamate from L-histidine: step 1/3. The chain is Histidine ammonia-lyase from Geobacillus thermodenitrificans (strain NG80-2).